Reading from the N-terminus, the 377-residue chain is Lipoyl synthase, mitochondrial (377 aa).

Residues Cys103, Cys108, Cys114, Cys134, Cys138, Cys141, and Ser349 each coordinate [4Fe-4S] cluster. The Radical SAM core domain maps to 119-338 (EHGTQTATIM…EERGNELGFL (220 aa)).

The protein belongs to the radical SAM superfamily. Lipoyl synthase family. Requires [4Fe-4S] cluster as cofactor.

The protein resides in the mitochondrion. The enzyme catalyses [[Fe-S] cluster scaffold protein carrying a second [4Fe-4S](2+) cluster] + N(6)-octanoyl-L-lysyl-[protein] + 2 oxidized [2Fe-2S]-[ferredoxin] + 2 S-adenosyl-L-methionine + 4 H(+) = [[Fe-S] cluster scaffold protein] + N(6)-[(R)-dihydrolipoyl]-L-lysyl-[protein] + 4 Fe(3+) + 2 hydrogen sulfide + 2 5'-deoxyadenosine + 2 L-methionine + 2 reduced [2Fe-2S]-[ferredoxin]. It functions in the pathway protein modification; protein lipoylation via endogenous pathway; protein N(6)-(lipoyl)lysine from octanoyl-[acyl-carrier-protein]: step 2/2. Functionally, catalyzes the radical-mediated insertion of two sulfur atoms into the C-6 and C-8 positions of the octanoyl moiety bound to the lipoyl domains of lipoate-dependent enzymes, thereby converting the octanoylated domains into lipoylated derivatives. This Drosophila melanogaster (Fruit fly) protein is Lipoyl synthase, mitochondrial.